Reading from the N-terminus, the 216-residue chain is Large ribosomal subunit protein uL1B (216 aa).

Ser11 is modified (phosphoserine).

Belongs to the universal ribosomal protein uL1 family. As to quaternary structure, component of the large ribosomal subunit (LSU). Mature yeast ribosomes consist of a small (40S) and a large (60S) subunit. The 40S small subunit contains 1 molecule of ribosomal RNA (18S rRNA) and at least 33 different proteins. The large 60S subunit contains 3 rRNA molecules (25S, 5.8S and 5S rRNA) and at least 46 different proteins. uL1 forms part of the L1 stalk.

The protein localises to the cytoplasm. Functionally, component of the ribosome, a large ribonucleoprotein complex responsible for the synthesis of proteins in the cell. The small ribosomal subunit (SSU) binds messenger RNAs (mRNAs) and translates the encoded message by selecting cognate aminoacyl-transfer RNA (tRNA) molecules. The large subunit (LSU) contains the ribosomal catalytic site termed the peptidyl transferase center (PTC), which catalyzes the formation of peptide bonds, thereby polymerizing the amino acids delivered by tRNAs into a polypeptide chain. The nascent polypeptides leave the ribosome through a tunnel in the LSU and interact with protein factors that function in enzymatic processing, targeting, and the membrane insertion of nascent chains at the exit of the ribosomal tunnel. uL1 forms part of the L1 stalk, a mobile element that plays a role in evacuating the exit-site tRNA. The sequence is that of Large ribosomal subunit protein uL1B (rpl101) from Schizosaccharomyces pombe (strain 972 / ATCC 24843) (Fission yeast).